We begin with the raw amino-acid sequence, 230 residues long: Large ribosomal subunit protein uL1 (230 aa).

It belongs to the universal ribosomal protein uL1 family. In terms of assembly, part of the 50S ribosomal subunit.

In terms of biological role, binds directly to 23S rRNA. The L1 stalk is quite mobile in the ribosome, and is involved in E site tRNA release. Its function is as follows. Protein L1 is also a translational repressor protein, it controls the translation of the L11 operon by binding to its mRNA. The chain is Large ribosomal subunit protein uL1 from Bacillus cereus (strain B4264).